The sequence spans 146 residues: Large ribosomal subunit protein uL15 (146 aa).

Residues 1–42 form a disordered region; sequence MTIKLHDLQPARGSKTTRTRVGRGEASKGKTAGRGTKGTKAR.

This sequence belongs to the universal ribosomal protein uL15 family. As to quaternary structure, part of the 50S ribosomal subunit.

In terms of biological role, binds to the 23S rRNA. This chain is Large ribosomal subunit protein uL15, found in Mycobacterium leprae (strain Br4923).